The primary structure comprises 485 residues: E3 ubiquitin-protein ligase TRIM68 (485 aa).

Residues 16-61 (CPICMTFLREPMSIDCGHSFCHSCLSGLWEIPGESQNWGYTCPLCR) form an RING-type zinc finger. The segment at 93-134 (LKGDLCERHGEKLKMFCKEDVLIMCEACSQSPEHEAHSVVPM) adopts a B box-type zinc-finger fold. 4 residues coordinate Zn(2+): cysteine 98, histidine 101, cysteine 120, and histidine 126. The stretch at 207-239 (AEVAAALASLQREAAETMQKLELNHSELIQQSQ) forms a coiled coil. A B30.2/SPRY domain is found at 285 to 481 (LKTDCRVLGL…NTAPLAICSL (197 aa)).

This sequence belongs to the TRIM/RBCC family. In terms of assembly, interacts with AR/androgen receptor (via ligand-binding domain). Interacts with KAT5/TIP60. In terms of processing, auto-ubiquitinated. As to expression, widely expressed. Expressed at high levels in prostate cancer cell lines. Up-regulation could be restricted to androgen-dependent cells.

Its subcellular location is the cytoplasm. The protein resides in the perinuclear region. The protein localises to the nucleus. It catalyses the reaction S-ubiquitinyl-[E2 ubiquitin-conjugating enzyme]-L-cysteine + [acceptor protein]-L-lysine = [E2 ubiquitin-conjugating enzyme]-L-cysteine + N(6)-ubiquitinyl-[acceptor protein]-L-lysine.. Its pathway is protein modification; protein ubiquitination. Functionally, functions as a ubiquitin E3 ligase. Acts as a coactivator of androgen receptor (AR) depending on its ubiquitin ligase activity. The polypeptide is E3 ubiquitin-protein ligase TRIM68 (TRIM68) (Homo sapiens (Human)).